The primary structure comprises 233 residues: UPF0758 protein TTE0897 (233 aa).

An MPN domain is found at 108-230; the sequence is SVTSPEDVIN…GISLKEKGYY (123 aa). Positions 179, 181, and 192 each coordinate Zn(2+). Residues 179–192 carry the JAMM motif motif; sequence HNHPSGDPTPSRED.

It belongs to the UPF0758 family.

This is UPF0758 protein TTE0897 from Caldanaerobacter subterraneus subsp. tengcongensis (strain DSM 15242 / JCM 11007 / NBRC 100824 / MB4) (Thermoanaerobacter tengcongensis).